A 284-amino-acid chain; its full sequence is MSFDEIAPDAKKVAIYGKGGIGKSTTTQNTAAALAYFFDKKVMIHGCDPKADSTRMILHGKPQDTVMDVLREEGEEAVTLEKVRKIGFKDILCVESGGPEPGVGCAGRGVITAVDMMRELEGYPDDLDNLFFDVLGDVVCGGFAMPLRDGLAQEIYIVTSGEMMALYAANNIAKGILKYAEQSGVRLGGIICNARNVDGEKELMDEFCDKLGTKLIHYVPRDNIVQKAEFNKMTVIEFDPECNQAKEYRTLAKNIDENDELVKPTPMTMDELEELVVKYGLIDL.

17–24 (GKGGIGKS) provides a ligand contact to ATP. Cysteine 105 serves as a coordination point for [4Fe-4S] cluster. The residue at position 108 (arginine 108) is an ADP-ribosylarginine; by dinitrogenase reductase ADP-ribosyltransferase. Cysteine 140 contributes to the [4Fe-4S] cluster binding site.

Belongs to the NifH/BchL/ChlL family. In terms of assembly, homodimer. [4Fe-4S] cluster is required as a cofactor. In terms of processing, the reversible ADP-ribosylation of Arg-108 inactivates the nitrogenase reductase and regulates nitrogenase activity.

The enzyme catalyses N2 + 8 reduced [2Fe-2S]-[ferredoxin] + 16 ATP + 16 H2O = H2 + 8 oxidized [2Fe-2S]-[ferredoxin] + 2 NH4(+) + 16 ADP + 16 phosphate + 6 H(+). Its function is as follows. The key enzymatic reactions in nitrogen fixation are catalyzed by the nitrogenase complex, which has 2 components: the iron protein and the molybdenum-iron protein. The chain is Nitrogenase iron protein 1 (nifH1) from Methanothermococcus thermolithotrophicus (Methanococcus thermolithotrophicus).